Reading from the N-terminus, the 1176-residue chain is Pesticidal crystal protein Cry1Cb (1176 aa).

Belongs to the delta endotoxin family.

Functionally, promotes colloidosmotic lysis by binding to the midgut epithelial cells of insects. Toxic to Spodoptera exigua and Trichoplusia ni. The polypeptide is Pesticidal crystal protein Cry1Cb (cry1Cb) (Bacillus thuringiensis subsp. galleriae).